The following is a 954-amino-acid chain: Endoplasmic reticulum aminopeptidase 2 (954 aa).

The Cytoplasmic segment spans residues 1-7 (MANSCRK). A helical; Signal-anchor for type II membrane protein transmembrane segment spans residues 8–28 (LIFNIYVVFYCSAVIMPQICI). The Lumenal portion of the chain corresponds to 29–954 (CSQFTSSPID…TLRKWLLTSI (926 aa)). N-linked (GlcNAc...) asparagine glycans are attached at residues Asn79 and Asn113. Residues Glu194 and 328 to 332 (GAMEN) contribute to the substrate site. Position 364 (His364) interacts with Zn(2+). Catalysis depends on Glu365, which acts as the Proton acceptor. His368 and Glu387 together coordinate Zn(2+). Residue Asn399 is glycosylated (N-linked (GlcNAc...) asparagine). Cys415 and Cys454 are joined by a disulfide. Asn644 carries N-linked (GlcNAc...) asparagine glycosylation. The cysteines at positions 753 and 760 are disulfide-linked.

Belongs to the peptidase M1 family. As to quaternary structure, heterodimer with ERAP1. It depends on Zn(2+) as a cofactor. N-glycosylated.

The protein resides in the endoplasmic reticulum membrane. In terms of biological role, aminopeptidase that plays a central role in peptide trimming, a step required for the generation of most HLA class I-binding peptides. Peptide trimming is essential to customize longer precursor peptides to fit them to the correct length required for presentation on MHC class I molecules. Preferentially hydrolyzes the basic residues Arg and Lys. This Bos taurus (Bovine) protein is Endoplasmic reticulum aminopeptidase 2 (ERAP2).